The chain runs to 98 residues: MQVLVRDNNVDQALKALKKKMQREGIFREMKLRGHYEKPSEKKAREKAEAVRRARKLARKKLQREGLLPMKPKPVFGAGAGGERGGRGGPGAGPRGPR.

The tract at residues 61–98 (KLQREGLLPMKPKPVFGAGAGGERGGRGGPGAGPRGPR) is disordered. Over residues 78–98 (AGAGGERGGRGGPGAGPRGPR) the composition is skewed to gly residues.

It belongs to the bacterial ribosomal protein bS21 family.

The polypeptide is Small ribosomal subunit protein bS21B (Bradyrhizobium diazoefficiens (strain JCM 10833 / BCRC 13528 / IAM 13628 / NBRC 14792 / USDA 110)).